The primary structure comprises 251 residues: Tyrosine phosphatase-like protein J3 (251 aa).

The 226-residue stretch at 26 to 251 folds into the Tyrosine-protein phosphatase domain; sequence IADEYYTIVP…PVLQNSKRRE (226 aa).

It belongs to the protein-tyrosine phosphatase family.

The chain is Tyrosine phosphatase-like protein J3 (J4) from Microplitis demolitor (Parasitoid wasp).